We begin with the raw amino-acid sequence, 873 residues long: Zinc fingers and homeoboxes protein 1 (873 aa).

The segment at 1-63 (MASRRKSTTP…ESVDSDNQQN (63 aa)) is disordered. Over residues 18–30 (QDPDLELISDLEE) the composition is skewed to acidic residues. Thr-36 carries the post-translational modification Phosphothreonine. Phosphoserine occurs at positions 45, 47, and 48. C2H2-type zinc fingers lie at residues 70–93 (YECKYCTFQTPDLNMFTFHVDSEH) and 102–125 (YVCVECNFLTKRYDALSEHNLKYH). Residue Lys-159 forms a Glycyl lysine isopeptide (Lys-Gly) (interchain with G-Cter in SUMO2) linkage. The segment at 198-247 (VHHNSAEGTSEEKENGVKASREENAENTSSSASESNTSTSTVNQVHPSPA) is disordered. At Ser-202 the chain carries Phosphoserine. The segment covering 207–221 (SEEKENGVKASREEN) has biased composition (basic and acidic residues). Positions 223–238 (ENTSSSASESNTSTST) are enriched in low complexity. The interval 272–432 (NSNLVPKVLI…QTNVQKSQVP (161 aa)) is required for dimerization. The interval 272 to 564 (NSNLVPKVLI…SQPKQSWNPF (293 aa)) is required for interaction with NFYA. Residues 284–346 (NSIPTYNAAL…LKHGVSWTPE (63 aa)) constitute a DNA-binding region (homeobox 1). Residues 430–455 (QVPAAQPAAETKPATAAVPSSPSVRP) are disordered. Residues Lys-441 and Lys-485 each participate in a glycyl lysine isopeptide (Lys-Gly) (interchain with G-Cter in SUMO2) cross-link. A DNA-binding region (homeobox 2) is located at residues 464–526 (SFGIRAKKTK…YNQRNSKSNQ (63 aa)). Disordered regions lie at residues 540 to 568 (IDSSDETPEPPAAAASQPKQSWNPFPDFA), 627 to 664 (DEKVEVDESNVGSSKEEPGENSPGDEAVAPKSAGTGKI), and 731 to 767 (SSSLNGLSSLRKRGRGRPKGRGRGRPRGRPRGGKRMN). The span at 551 to 560 (AAAASQPKQS) shows a compositional bias: low complexity. Positions 569 to 631 (PQKFKEKTAE…TKALKDEKVE (63 aa)) form a DNA-binding region, homeobox 3. Residue Lys-629 forms a Glycyl lysine isopeptide (Lys-Gly) (interchain with G-Cter in SUMO2) linkage. Ser-648 carries the phosphoserine modification. A DNA-binding region (homeobox 4) is located at residues 660 to 722 (GTGKICKKTP…YAWKNGNLKW (63 aa)). The tract at residues 734-768 (LNGLSSLRKRGRGRPKGRGRGRPRGRPRGGKRMNT) is required for nuclear localization. The span at 740-764 (LRKRGRGRPKGRGRGRPRGRPRGGK) shows a compositional bias: basic residues. Ser-774 is modified (phosphoserine). Residues 777 to 832 (KFKTGTAILKDYYLKHKFLNEQDLDELVNRSHMGYEQVREWFAERQRRSELGIELF) constitute a DNA-binding region (homeobox 5). Residues 829-873 (IELFEENEEEDEVIDDQEEDEEETDDSDTWEPPRHVKRKLSKSDD) form a disordered region. Over residues 831 to 857 (LFEENEEEDEVIDDQEEDEEETDDSDT) the composition is skewed to acidic residues. Positions 831 to 873 (LFEENEEEDEVIDDQEEDEEETDDSDTWEPPRHVKRKLSKSDD) are required for repressor activity. Residues 863 to 873 (HVKRKLSKSDD) show a composition bias toward basic residues.

Belongs to the ZHX family. In terms of assembly, forms homodimers. Heterodimer (via HD1 domain) with ZHX2 (via HD1 domain). Also forms a heterodimer with ZHX3 which is a prerequisite for repressor activity. Interacts with ATF7IP and NFYA. Interacts (via homeobox domains) with DNMT3B (via PWWP domain). In terms of tissue distribution, ubiquitously expressed.

The protein localises to the nucleus. In terms of biological role, acts as a transcriptional repressor. Increases DNMT3B-mediated repressive transcriptional activity when DNMT3B is tethered to DNA. May link molecule between DNMT3B and other co-repressor proteins. This is Zinc fingers and homeoboxes protein 1 (Zhx1) from Rattus norvegicus (Rat).